The sequence spans 1407 residues: Enhancer of mRNA-decapping protein 4 (1407 aa).

N-acetylalanine is present on Ala2. A phosphoserine mark is found at Ser3 and Ser6. Lys125 carries the N6-acetyllysine modification. WD repeat units lie at residues 174 to 214 (GFTG…GKIQ), 230 to 277 (NHFR…SSHS), 295 to 334 (GHST…QDEP), and 342 to 393 (PHDG…CLQT). A disordered region spans residues 547-566 (GESRPELGSEGLASAPHGSQ). A phosphoserine mark is found at Ser560, Ser565, Ser583, and Ser585. 2 disordered regions span residues 604 to 632 (SLQQ…SSSS) and 673 to 745 (SSSS…STAL). 2 stretches are compositionally biased toward low complexity: residues 609–632 (SASP…SSSS) and 673–693 (SSSS…LPGP). Residues Ser681, Ser713, Ser728, and Ser730 each carry the phosphoserine modification. A compositionally biased stretch (polar residues) spans 727-745 (ASPSRTRSPDVISSASTAL). Thr732 carries the phosphothreonine modification. Phosphoserine occurs at positions 734 and 746. Positions 787–817 (PRPRQGPELSSQLGLDGGPGDGDRHSTPSLL) are disordered. Thr827 carries the post-translational modification Phosphothreonine. Phosphoserine is present on residues Ser850 and Ser877. The tract at residues 875–951 (HDSQDTSAEQ…SRLTEHQVVE (77 aa)) is disordered. Thr880 carries the phosphothreonine modification. A phosphoserine mark is found at Ser881, Ser885, Ser893, Ser896, and Ser898. At Thr907 the chain carries Phosphothreonine. A coiled-coil region spans residues 972-1031 (HNQEELLQRLCAQLEGLQSTVTDHVERALETRHEQEQRRLERALAEGQQRGGQLQEQLTQ). Ser1386 carries the phosphoserine modification.

The protein belongs to the WD repeat EDC4 family. As to quaternary structure, part of a decapping complex consisting of DCP1A, DCP2, EDC3, EDC4 and probably DDX6. Part of a complex consisting of DCP1A, EDC3, EDC4 and DDX6. Part of a complex consisting of DCP1B, EDC3, EDC4 and DDX6. Interacts with DCP2. Interacts with NBDY. Interacts with Tex19.1. Interacts with LSM14A. Interacts with DDX6.

It localises to the cytoplasm. It is found in the P-body. The protein resides in the nucleus. In terms of biological role, in the process of mRNA degradation, seems to play a role in mRNA decapping. Component of a complex containing DCP2 and DCP1A which functions in decapping of ARE-containing mRNAs. Promotes complex formation between DCP1A and DCP2. Enhances the catalytic activity of DCP2 (in vitro). This chain is Enhancer of mRNA-decapping protein 4 (Edc4), found in Rattus norvegicus (Rat).